Consider the following 152-residue polypeptide: Stigma-specific STIG1-like protein 1 (152 aa).

An N-terminal signal peptide occupies residues 1 to 19 (MAFVKLLVSIAITTAITIA).

Belongs to the STIG1 family.

The polypeptide is Stigma-specific STIG1-like protein 1 (Arabidopsis thaliana (Mouse-ear cress)).